Reading from the N-terminus, the 102-residue chain is Large ribosomal subunit protein uL24c (102 aa).

This sequence belongs to the universal ribosomal protein uL24 family. As to quaternary structure, part of the 50S ribosomal subunit.

The protein localises to the plastid. It localises to the chloroplast. Functionally, one of two assembly initiator proteins, it binds directly to the 5'-end of the 23S rRNA, where it nucleates assembly of the 50S subunit. This chain is Large ribosomal subunit protein uL24c (rpl24), found in Rhodomonas salina (Cryptomonas salina).